Consider the following 321-residue polypeptide: MATH domain and coiled-coil domain-containing protein At3g58410 (321 aa).

One can recognise an MATH domain in the interval 6 to 128 (GKKFAWVIKN…NGELMIVAEV (123 aa)). Positions 255 to 310 (KVDWLEKKLDQVRDKKEKERSCLAKLQETEETLLKLKQKCTELDALMDTEKAELSA) form a coiled coil.

In Arabidopsis thaliana (Mouse-ear cress), this protein is MATH domain and coiled-coil domain-containing protein At3g58410.